Consider the following 590-residue polypeptide: Protein Spindly (590 aa).

Positions 1–401 (MSDLEDEIKV…SMARMKALSE (401 aa)) form a coiled coil. Positions 446 to 590 (NKAQVQKRRR…KTMANECAQQ (145 aa)) are disordered. Composition is skewed to basic and acidic residues over residues 483-497 (SNEKAEEKTPSHPVE) and 518-527 (RESKSVRICE). 2 stretches are compositionally biased toward polar residues: residues 541–554 (VNDSNSKNVDQTHQ) and 572–590 (QQPTHVSSQKTMANECAQQ).

This sequence belongs to the Spindly family.

The protein localises to the chromosome. The protein resides in the centromere. It is found in the kinetochore. Required for the localization of dynein and dynactin to the mitotic kintochore. Dynein is believed to control the initial lateral interaction between the kinetochore and spindle microtubules and to facilitate the subsequent formation of end-on kinetochore-microtubule attachments mediated by the NDC80 complex. May act as an adapter protein linking the dynein motor complex to various cargos. The chain is Protein Spindly (spdl1) from Danio rerio (Zebrafish).